A 157-amino-acid polypeptide reads, in one-letter code: Transcription elongation factor GreA (157 aa).

Residues 17–37 are a coiled coil; sequence ELERLLKLRPQISEAIAEARE.

Belongs to the GreA/GreB family.

Necessary for efficient RNA polymerase transcription elongation past template-encoded arresting sites. The arresting sites in DNA have the property of trapping a certain fraction of elongating RNA polymerases that pass through, resulting in locked ternary complexes. Cleavage of the nascent transcript by cleavage factors such as GreA or GreB allows the resumption of elongation from the new 3'terminus. GreA releases sequences of 2 to 3 nucleotides. This chain is Transcription elongation factor GreA, found in Vibrio parahaemolyticus serotype O3:K6 (strain RIMD 2210633).